The following is a 487-amino-acid chain: Cyclic AMP-dependent transcription factor ATF-2 (487 aa).

The segment at 7 to 31 (FLCTAPGCGQRFTNEDHLAVHKHKH) adopts a C2H2-type zinc-finger fold. Thr34 bears the Phosphothreonine; by PKC/PRKCH mark. Ser44 is modified (phosphoserine; by VRK1). Phosphothreonine is present on residues Thr51 and Thr53. At Thr55 the chain carries Phosphothreonine; by VRK1. Phosphoserine is present on residues Ser72 and Ser94. At Thr98 the chain carries Phosphothreonine. Phosphoserine; by PKC/PRKCA and PKC/PRKCB is present on Ser103. Disordered regions lie at residues 107–130 (EPSVVETTHQDSPLPHPESTTNDE) and 241–355 (PGIP…RQKR). Ser118 is subject to Phosphoserine. Residues 264–275 (LTQQHPPVTNGD) are compositionally biased toward polar residues. Residues 278 to 281 (KGHG) are essential for its histone acetyltransferase activity. Positions 300-316 (PATSTTETPASPAHTTP) are enriched in low complexity. Phosphoserine is present on Ser310. Phosphoserine; by PKC/PRKCA and PKC/PRKCB is present on Ser322. Positions 328 to 345 (AANEDPDEKRRKFLERNR) are enriched in basic and acidic residues. One can recognise a bZIP domain in the interval 334–397 (DEKRRKFLER…AQLKQLLLAH (64 aa)). The basic motif stretch occupies residues 336–356 (KRRKFLERNRAAASRCRQKRK). The residue at position 339 (Lys339) is an N6-acetyllysine. Ser349 is subject to Phosphoserine; by PKC/PRKCA and PKC/PRKCB. At Lys356 the chain carries N6-acetyllysine. The tract at residues 362 to 390 (LEKKAEDLSSLNGQLQSEVTLLRNEVAQL) is leucine-zipper. A Nuclear export signal motif is present at residues 387–396 (VAQLKQLLLA). The tract at residues 407–487 (KKSGYHTADK…PSSQAQPSGS (81 aa)) is disordered. 2 positions are modified to phosphoserine: Ser424 and Ser428. The span at 425 to 436 (VPSSPHTEAIQH) shows a compositional bias: polar residues. The segment covering 437–449 (SSVSTSNGVSSTS) has biased composition (low complexity). The span at 457 to 470 (SVLTQMADQSTEPA) shows a compositional bias: polar residues. Ser472 and Ser480 each carry phosphoserine; by ATM. The span at 478-487 (PSSQAQPSGS) shows a compositional bias: polar residues.

It belongs to the bZIP family. ATF subfamily. In terms of assembly, binds DNA as a dimer and can form a homodimer in the absence of DNA. Can form a heterodimer with JUN. Heterodimerization is essential for its transcriptional activity. Interacts with SMAD3 and SMAD4. Binds through its N-terminal region to UTF1 which acts as a coactivator of ATF2 transcriptional activity. Interacts with the HK1/VDAC1 complex. Interacts with NBN, MRE11, XPO1, KAT5 and CUL3. Post-translationally, phosphorylation of Thr-51 by MAPK14 and MAPK11, and at Thr-53 by MAPK1/ERK2, MAPK3/ERK1, MAPK11, MAPK12 and MAPK14 in response to external stimulus like insulin causes increased transcriptional activity. Phosphorylated by PLK3 following hyperosmotic stress. Also phosphorylated and activated by JNK and CaMK4. ATM-mediated phosphorylation at Ser-472 and Ser-480 stimulates its function in DNA damage response. Phosphorylation at Ser-44, Thr-55 and Ser-103 activates its transcriptional activity. Phosphorylation at Thr-51 or Thr-53 enhances acetylation of histones H2B and H4.

Its subcellular location is the nucleus. The protein localises to the cytoplasm. It is found in the mitochondrion outer membrane. In terms of biological role, transcriptional activator which regulates the transcription of various genes, including those involved in anti-apoptosis, cell growth, and DNA damage response. Dependent on its binding partner, binds to CRE (cAMP response element) consensus sequences (5'-TGACGTCA-3') or to AP-1 (activator protein 1) consensus sequences (5'-TGACTCA-3'). In the nucleus, contributes to global transcription and the DNA damage response, in addition to specific transcriptional activities that are related to cell development, proliferation and death. In the cytoplasm, interacts with and perturbs HK1- and VDAC1-containing complexes at the mitochondrial outer membrane, thereby impairing mitochondrial membrane potential, inducing mitochondrial leakage and promoting cell death. The phosphorylated form (mediated by ATM) plays a role in the DNA damage response and is involved in the ionizing radiation (IR)-induced S phase checkpoint control and in the recruitment of the MRN complex into the IR-induced foci (IRIF). Exhibits histone acetyltransferase (HAT) activity which specifically acetylates histones H2B and H4 in vitro. In concert with CUL3 and RBX1, promotes the degradation of KAT5 thereby attenuating its ability to acetylate and activate ATM. Can elicit oncogenic or tumor suppressor activities depending on the tissue or cell type. In Rattus norvegicus (Rat), this protein is Cyclic AMP-dependent transcription factor ATF-2 (Atf2).